Consider the following 342-residue polypeptide: Trace amine-associated receptor 8 (342 aa).

The Extracellular portion of the chain corresponds to M1–R31. N-linked (GlcNAc...) asparagine glycosylation is found at N4 and N18. Cystine bridges form between C21/C185 and C104/C189. Residues V32–V52 traverse the membrane as a helical segment. The Cytoplasmic segment spans residues M53–N67. The chain crosses the membrane as a helical span at residues F68–S88. Topologically, residues M89–D111 are extracellular. Residues V112–V132 traverse the membrane as a helical segment. Residues V133–S146 are Cytoplasmic-facing. A helical transmembrane segment spans residues V147–F167. Topologically, residues Y168 to Q195 are extracellular. Residues G196–Y216 form a helical membrane-spanning segment. Topologically, residues S217–T258 are cytoplasmic. Residues L259–I279 form a helical membrane-spanning segment. Residue D280 is a topological domain, extracellular. Residues A281–Y301 traverse the membrane as a helical segment. Residues N302 to E342 are Cytoplasmic-facing.

This sequence belongs to the G-protein coupled receptor 1 family. In terms of tissue distribution, expressed in kidney and amygdala. Not expressed in other tissues or brain regions tested.

It is found in the cell membrane. Functionally, olfactory receptor specific for trace amines. Trace amine compounds are enriched in animal body fluids and act on trace amine-associated receptors (TAARs) to elicit both intraspecific and interspecific innate behaviors. Ligand-binding causes a conformation change that triggers signaling via G alpha proteins, possibly G(i)/G(o) G alpha proteins. The sequence is that of Trace amine-associated receptor 8 (TAAR8) from Homo sapiens (Human).